The following is a 499-amino-acid chain: Glycerol kinase (499 aa).

Threonine 12 is a binding site for ADP. 3 residues coordinate ATP: threonine 12, threonine 13, and serine 14. Threonine 12 lines the sn-glycerol 3-phosphate pocket. An ADP-binding site is contributed by arginine 16. 3 residues coordinate sn-glycerol 3-phosphate: arginine 82, glutamate 83, and tyrosine 134. Residues arginine 82, glutamate 83, and tyrosine 134 each contribute to the glycerol site. Histidine 230 carries the post-translational modification Phosphohistidine; by HPr. Sn-glycerol 3-phosphate is bound at residue aspartate 244. 2 residues coordinate glycerol: aspartate 244 and glutamine 245. ADP is bound by residues threonine 266 and glycine 309. Residues threonine 266, glycine 309, glutamine 313, and glycine 410 each coordinate ATP. 2 residues coordinate ADP: glycine 410 and asparagine 414.

Belongs to the FGGY kinase family. Homotetramer and homodimer (in equilibrium). The phosphoenolpyruvate-dependent sugar phosphotransferase system (PTS), including enzyme I, and histidine-containing protein (HPr) are required for the phosphorylation, which leads to the activation of the enzyme.

It carries out the reaction glycerol + ATP = sn-glycerol 3-phosphate + ADP + H(+). The protein operates within polyol metabolism; glycerol degradation via glycerol kinase pathway; sn-glycerol 3-phosphate from glycerol: step 1/1. Its activity is regulated as follows. Activated by phosphorylation and inhibited by fructose 1,6-bisphosphate (FBP). In terms of biological role, key enzyme in the regulation of glycerol uptake and metabolism. Catalyzes the phosphorylation of glycerol to yield sn-glycerol 3-phosphate. In Staphylococcus epidermidis (strain ATCC 12228 / FDA PCI 1200), this protein is Glycerol kinase.